A 255-amino-acid chain; its full sequence is Large ribosomal subunit protein uL4 (255 aa).

This sequence belongs to the universal ribosomal protein uL4 family. As to quaternary structure, part of the 50S ribosomal subunit.

Functionally, one of the primary rRNA binding proteins, this protein initially binds near the 5'-end of the 23S rRNA. It is important during the early stages of 50S assembly. It makes multiple contacts with different domains of the 23S rRNA in the assembled 50S subunit and ribosome. Its function is as follows. Forms part of the polypeptide exit tunnel. In Thermococcus onnurineus (strain NA1), this protein is Large ribosomal subunit protein uL4.